Reading from the N-terminus, the 113-residue chain is uncharacterized protein (113 aa).

Belongs to the ycf68 family.

The protein localises to the plastid. It localises to the chloroplast. This is an uncharacterized protein from Eucalyptus globulus subsp. globulus (Tasmanian blue gum).